The following is a 537-amino-acid chain: Hydroxylamine reductase (537 aa).

[4Fe-4S] cluster contacts are provided by C3, C6, C15, and C21. 8 residues coordinate hybrid [4Fe-2O-2S] cluster: H239, E263, C307, C393, C421, C446, E480, and K482. C393 is modified (cysteine persulfide).

Belongs to the HCP family. [4Fe-4S] cluster serves as cofactor. The cofactor is hybrid [4Fe-2O-2S] cluster.

It is found in the cytoplasm. The enzyme catalyses A + NH4(+) + H2O = hydroxylamine + AH2 + H(+). Functionally, catalyzes the reduction of hydroxylamine to form NH(3) and H(2)O. This chain is Hydroxylamine reductase, found in Lawsonia intracellularis (strain PHE/MN1-00).